A 302-amino-acid chain; its full sequence is Phosphatidylglycerol--prolipoprotein diacylglyceryl transferase (302 aa).

The next 3 membrane-spanning stretches (helical) occupy residues 26–46, 67–87, and 108–128; these read WYAL…VMLV, LVLW…VLFY, and IWEG…AIVL. Arginine 156 lines the a 1,2-diacyl-sn-glycero-3-phospho-(1'-sn-glycerol) pocket. 2 helical membrane passes run 231 to 251 and 263 to 283; these read GALV…LEGV and LGLT…VWLL.

The protein belongs to the Lgt family.

Its subcellular location is the cell inner membrane. It catalyses the reaction L-cysteinyl-[prolipoprotein] + a 1,2-diacyl-sn-glycero-3-phospho-(1'-sn-glycerol) = an S-1,2-diacyl-sn-glyceryl-L-cysteinyl-[prolipoprotein] + sn-glycerol 1-phosphate + H(+). The protein operates within protein modification; lipoprotein biosynthesis (diacylglyceryl transfer). In terms of biological role, catalyzes the transfer of the diacylglyceryl group from phosphatidylglycerol to the sulfhydryl group of the N-terminal cysteine of a prolipoprotein, the first step in the formation of mature lipoproteins. This chain is Phosphatidylglycerol--prolipoprotein diacylglyceryl transferase, found in Caulobacter sp. (strain K31).